A 99-amino-acid chain; its full sequence is Small ribosomal subunit protein bS20 (99 aa).

The protein belongs to the bacterial ribosomal protein bS20 family.

In terms of biological role, binds directly to 16S ribosomal RNA. This chain is Small ribosomal subunit protein bS20, found in Thermomicrobium roseum (strain ATCC 27502 / DSM 5159 / P-2).